A 92-amino-acid chain; its full sequence is Small ribosomal subunit protein uS19c (92 aa).

It belongs to the universal ribosomal protein uS19 family.

The protein localises to the plastid. The protein resides in the chloroplast. Protein S19 forms a complex with S13 that binds strongly to the 16S ribosomal RNA. The polypeptide is Small ribosomal subunit protein uS19c (Spirogyra maxima (Green alga)).